The primary structure comprises 874 residues: Alanine--tRNA ligase (874 aa).

Residues His-562, His-566, Cys-664, and His-668 each coordinate Zn(2+).

The protein belongs to the class-II aminoacyl-tRNA synthetase family. Zn(2+) serves as cofactor.

The protein localises to the cytoplasm. It catalyses the reaction tRNA(Ala) + L-alanine + ATP = L-alanyl-tRNA(Ala) + AMP + diphosphate. In terms of biological role, catalyzes the attachment of alanine to tRNA(Ala) in a two-step reaction: alanine is first activated by ATP to form Ala-AMP and then transferred to the acceptor end of tRNA(Ala). Also edits incorrectly charged Ser-tRNA(Ala) and Gly-tRNA(Ala) via its editing domain. The protein is Alanine--tRNA ligase of Shewanella baltica (strain OS155 / ATCC BAA-1091).